The following is a 160-amino-acid chain: Ribosomal RNA large subunit methyltransferase H (160 aa).

S-adenosyl-L-methionine is bound by residues Leu-76 and Gly-108.

This sequence belongs to the RNA methyltransferase RlmH family. Homodimer.

The protein localises to the cytoplasm. It catalyses the reaction pseudouridine(1915) in 23S rRNA + S-adenosyl-L-methionine = N(3)-methylpseudouridine(1915) in 23S rRNA + S-adenosyl-L-homocysteine + H(+). In terms of biological role, specifically methylates the pseudouridine at position 1915 (m3Psi1915) in 23S rRNA. This Rhodopseudomonas palustris (strain HaA2) protein is Ribosomal RNA large subunit methyltransferase H.